The sequence spans 494 residues: Tetracenomycin biosynthesis bifunctional cyclase/O-methyl transferase TcmN (494 aa).

Positions 11–140 are polyketide cyclase; that stretch reads VNAPFELVWD…TTTRANMERI (130 aa). Ser67 functions as the Proton acceptor; for cyclase activity in the catalytic mechanism. Catalysis depends on proton donor; for cyclase activity residues Arg69 and Arg82. Positions 169–494 are methyltransferase; that stretch reads LLLAASGRLA…TWTTLECRPV (326 aa). Residues Asp358 and 384 to 386 each bind S-adenosyl-L-methionine; that span reads GDF. His405 serves as the catalytic Proton acceptor; for methyltransferase activity.

The protein in the C-terminal section; belongs to the class I-like SAM-binding methyltransferase superfamily. Cation-independent O-methyltransferase family. In terms of assembly, the tetracenomycin polyketide synthase (TCM PKS) is composed of a ketosynthase complex (TcmKL), an acyl carrier protein (TcmM), a cyclase (TcmN) and a probable second cyclase (TcmJ). TcmN is a homodimer in solution.

It catalyses the reaction 10 malonyl-CoA + 8 H(+) = tetracenomycin F2 + 10 CO2 + 10 CoA + 2 H2O. It functions in the pathway antibiotic biosynthesis; tetracenomycin C biosynthesis. In terms of biological role, involved in the biosynthesis of tetracenomycin C (TCM C). Part of a type II polyketide synthase (PKS) that catalyzes the synthesis of tetracenomycin F2 (TCM F2), a precursor of TCM C, from malonyl-CoA. The TcmN N-terminal domain, when coupled with the other components of the PKS, catalyzes the cyclization and aromatization of the linear polyketide intermediate. Catalyzes the cyclization of the first and second rings. In addition, the C-terminal domain acts as a methyltransferase. It catalyzes the specific O-methylation of tetracenomycin D3 (TCM D3) to TCM B3, using S-adenosyl-L-methionine as the methyl donor. This is Tetracenomycin biosynthesis bifunctional cyclase/O-methyl transferase TcmN from Streptomyces glaucescens.